Reading from the N-terminus, the 356-residue chain is Peptide chain release factor 1 (356 aa).

Glutamine 230 bears the N5-methylglutamine mark. Positions 279–289 are enriched in basic and acidic residues; the sequence is ALDSARSEARK. The disordered stretch occupies residues 279 to 299; that stretch reads ALDSARSEARKSQVGSGDRSE.

The protein belongs to the prokaryotic/mitochondrial release factor family. In terms of processing, methylated by PrmC. Methylation increases the termination efficiency of RF1.

It is found in the cytoplasm. Its function is as follows. Peptide chain release factor 1 directs the termination of translation in response to the peptide chain termination codons UAG and UAA. This Caulobacter vibrioides (strain ATCC 19089 / CIP 103742 / CB 15) (Caulobacter crescentus) protein is Peptide chain release factor 1 (prfA).